We begin with the raw amino-acid sequence, 296 residues long: Glycine--tRNA ligase alpha subunit (296 aa).

It belongs to the class-II aminoacyl-tRNA synthetase family. In terms of assembly, tetramer of two alpha and two beta subunits.

It is found in the cytoplasm. The catalysed reaction is tRNA(Gly) + glycine + ATP = glycyl-tRNA(Gly) + AMP + diphosphate. This is Glycine--tRNA ligase alpha subunit from Exiguobacterium sibiricum (strain DSM 17290 / CCUG 55495 / CIP 109462 / JCM 13490 / 255-15).